A 644-amino-acid polypeptide reads, in one-letter code: Protein cueball (644 aa).

The first 26 residues, 1 to 26, serve as a signal peptide directing secretion; that stretch reads MIRIRFGMDVLLVVLLATCLLTPAHG. The Extracellular segment spans residues 27–531; it reads TPLEWDFAVT…VCLTPRVWTS (505 aa). Residues Asn-82 and Asn-108 are each glycosylated (N-linked (GlcNAc...) asparagine). 3 LDL-receptor class B repeats span residues 121–166, 167–211, and 212–257; these read MNLF…DVCR, RKLY…DQLS, and DRLF…TNDA. Residues Asn-175 and Asn-190 are each glycosylated (N-linked (GlcNAc...) asparagine). The N-linked (GlcNAc...) asparagine glycan is linked to Asn-313. EGF-like domains lie at 398–430 and 433–471; these read EIRE…FTGE and ELSV…ARCE. Intrachain disulfides connect Cys-402/Cys-411, Cys-406/Cys-421, Cys-437/Cys-447, Cys-441/Cys-459, and Cys-461/Cys-470. N-linked (GlcNAc...) asparagine glycosylation is found at Asn-473 and Asn-508. Residues 532–552 traverse the membrane as a helical segment; sequence SVIIILVVGIVSSLLLVAVIV. The Cytoplasmic portion of the chain corresponds to 553 to 644; the sequence is HGIRRLYKPK…LIHNMEDDLY (92 aa).

Belongs to the cueball family.

It is found in the cell membrane. Functionally, has a role in spermatogenesis and oogenesis. This is Protein cueball from Drosophila simulans (Fruit fly).